The primary structure comprises 392 residues: Chorismate synthase (392 aa).

Residues Arg-40 and Arg-46 each contribute to the NADP(+) site. Residues Arg-135–Ser-137, Gln-256–Ala-257, Gly-300, Lys-315–Thr-319, and Arg-341 each bind FMN.

This sequence belongs to the chorismate synthase family. Homotetramer. Requires FMNH2 as cofactor.

The catalysed reaction is 5-O-(1-carboxyvinyl)-3-phosphoshikimate = chorismate + phosphate. It participates in metabolic intermediate biosynthesis; chorismate biosynthesis; chorismate from D-erythrose 4-phosphate and phosphoenolpyruvate: step 7/7. Catalyzes the anti-1,4-elimination of the C-3 phosphate and the C-6 proR hydrogen from 5-enolpyruvylshikimate-3-phosphate (EPSP) to yield chorismate, which is the branch point compound that serves as the starting substrate for the three terminal pathways of aromatic amino acid biosynthesis. This reaction introduces a second double bond into the aromatic ring system. This Nocardioides sp. (strain ATCC BAA-499 / JS614) protein is Chorismate synthase.